Consider the following 472-residue polypeptide: Lactate utilization protein B (472 aa).

4Fe-4S ferredoxin-type domains follow at residues 304 to 334 (GTEF…GHSY) and 353 to 382 (YDDY…LHEL). [4Fe-4S] cluster contacts are provided by Cys-313, Cys-316, Cys-319, Cys-323, Cys-366, Cys-369, and Cys-373.

The protein belongs to the LutB/YkgF family.

Functionally, is involved in L-lactate degradation and allows cells to grow with lactate as the sole carbon source. Has probably a role as an electron transporter during oxidation of L-lactate. The chain is Lactate utilization protein B from Anoxybacillus flavithermus (strain DSM 21510 / WK1).